The chain runs to 243 residues: Orotidine 5'-phosphate decarboxylase (243 aa).

Residues Asp19, Lys41, 69 to 78 (DLKFFDIPAT), Thr124, Arg185, Gln194, Gly214, and Arg215 each bind substrate. Catalysis depends on Lys71, which acts as the Proton donor.

Belongs to the OMP decarboxylase family. Type 1 subfamily. As to quaternary structure, homodimer.

The catalysed reaction is orotidine 5'-phosphate + H(+) = UMP + CO2. The protein operates within pyrimidine metabolism; UMP biosynthesis via de novo pathway; UMP from orotate: step 2/2. Functionally, catalyzes the decarboxylation of orotidine 5'-monophosphate (OMP) to uridine 5'-monophosphate (UMP). The protein is Orotidine 5'-phosphate decarboxylase of Xanthomonas euvesicatoria pv. vesicatoria (strain 85-10) (Xanthomonas campestris pv. vesicatoria).